The sequence spans 307 residues: 4-hydroxy-3-methylbut-2-enyl diphosphate reductase (307 aa).

Cys-13 lines the [4Fe-4S] cluster pocket. His-42 and His-75 together coordinate (2E)-4-hydroxy-3-methylbut-2-enyl diphosphate. Dimethylallyl diphosphate is bound by residues His-42 and His-75. His-42 and His-75 together coordinate isopentenyl diphosphate. Cys-97 is a binding site for [4Fe-4S] cluster. His-125 is a binding site for (2E)-4-hydroxy-3-methylbut-2-enyl diphosphate. His-125 is a dimethylallyl diphosphate binding site. His-125 is a binding site for isopentenyl diphosphate. Glu-127 (proton donor) is an active-site residue. Thr-165 contributes to the (2E)-4-hydroxy-3-methylbut-2-enyl diphosphate binding site. Residue Cys-195 participates in [4Fe-4S] cluster binding. (2E)-4-hydroxy-3-methylbut-2-enyl diphosphate-binding residues include Ser-223, Ser-224, Asn-225, and Ser-267. Positions 223, 224, 225, and 267 each coordinate dimethylallyl diphosphate. Positions 223, 224, 225, and 267 each coordinate isopentenyl diphosphate.

This sequence belongs to the IspH family. [4Fe-4S] cluster is required as a cofactor.

It carries out the reaction isopentenyl diphosphate + 2 oxidized [2Fe-2S]-[ferredoxin] + H2O = (2E)-4-hydroxy-3-methylbut-2-enyl diphosphate + 2 reduced [2Fe-2S]-[ferredoxin] + 2 H(+). It catalyses the reaction dimethylallyl diphosphate + 2 oxidized [2Fe-2S]-[ferredoxin] + H2O = (2E)-4-hydroxy-3-methylbut-2-enyl diphosphate + 2 reduced [2Fe-2S]-[ferredoxin] + 2 H(+). It participates in isoprenoid biosynthesis; dimethylallyl diphosphate biosynthesis; dimethylallyl diphosphate from (2E)-4-hydroxy-3-methylbutenyl diphosphate: step 1/1. It functions in the pathway isoprenoid biosynthesis; isopentenyl diphosphate biosynthesis via DXP pathway; isopentenyl diphosphate from 1-deoxy-D-xylulose 5-phosphate: step 6/6. Its function is as follows. Catalyzes the conversion of 1-hydroxy-2-methyl-2-(E)-butenyl 4-diphosphate (HMBPP) into a mixture of isopentenyl diphosphate (IPP) and dimethylallyl diphosphate (DMAPP). Acts in the terminal step of the DOXP/MEP pathway for isoprenoid precursor biosynthesis. This is 4-hydroxy-3-methylbut-2-enyl diphosphate reductase from Chlamydia trachomatis serovar A (strain ATCC VR-571B / DSM 19440 / HAR-13).